Consider the following 837-residue polypeptide: V-type proton ATPase 116 kDa subunit a 1 (837 aa).

Topologically, residues M1–E388 are cytoplasmic. Residues T250 and T360 each carry the phosphothreonine modification. Residue Y364 is modified to Phosphotyrosine. A helical transmembrane segment spans residues I389–F407. The Vacuolar segment spans residues G408–D409. Residues F410–R426 traverse the membrane as a helical segment. Over E427–S441 the chain is Cytoplasmic. A helical transmembrane segment spans residues T442 to S471. At L472–S534 the chain is on the vacuolar side. N-linked (GalNAc...) asparagine glycosylation is present at N488. A helical transmembrane segment spans residues F535–L554. Over S555–F572 the chain is Cytoplasmic. The helical transmembrane segment at I573 to K593 threads the bilayer. Topologically, residues W594–F638 are vacuolar. The chain crosses the membrane as a helical span at residues L639–L658. Over R659 to T724 the chain is Cytoplasmic. Residues I725–A749 traverse the membrane as a helical segment. Topologically, residues Q750–A770 are vacuolar. A helical transmembrane segment spans residues G771–E809. Over F810 to E837 the chain is Cytoplasmic.

This sequence belongs to the V-ATPase 116 kDa subunit family. As to quaternary structure, V-ATPase is a heteromultimeric enzyme made up of two complexes: the ATP-hydrolytic V1 complex and the proton translocation V0 complex. The V1 complex consists of three catalytic AB heterodimers that form a heterohexamer, three peripheral stalks each consisting of EG heterodimers, one central rotor including subunits D and F, and the regulatory subunits C and H. The proton translocation complex V0 consists of the proton transport subunit a, a ring of proteolipid subunits c9c'', rotary subunit d, subunits e and f, and the accessory subunits ATP6AP1/Ac45 and ATP6AP2/PRR. Interacts with SPAAR.

It is found in the cytoplasmic vesicle. The protein localises to the clathrin-coated vesicle membrane. It localises to the secretory vesicle. The protein resides in the synaptic vesicle membrane. Its subcellular location is the melanosome. In terms of biological role, subunit of the V0 complex of vacuolar(H+)-ATPase (V-ATPase), a multisubunit enzyme composed of a peripheral complex (V1) that hydrolyzes ATP and a membrane integral complex (V0) that transports protons across cellular membranes. V-ATPase is responsible for the acidification of various organelles, such as lysosomes, endosomes, the trans-Golgi network, and secretory granules, including synaptic vesicles. In certain cell types, can be exported to the plasma membrane, where it is involved in the acidification of the extracellular environment. Required for assembly and activity of the vacuolar ATPase. Through its action on compartment acidification, plays an essential role in neuronal development in terms of integrity and connectivity of neurons. This Homo sapiens (Human) protein is V-type proton ATPase 116 kDa subunit a 1 (ATP6V0A1).